The sequence spans 727 residues: Plakophilin-1 (727 aa).

Residues 1-235 (MNHSPLKTAL…SFSHSRASSK (235 aa)) form a required for binding to single stranded DNA region. The tract at residues 1 to 287 (MNHSPLKTAL…ESAKQQVYQL (287 aa)) is required for interaction with EIF4A1. The residue at position 4 (serine 4) is a Phosphoserine. Residues 48–69 (TVKRQKSKSSQSSTLSHSNRGS) form a disordered region. Phosphorylation in this region is required for cytoplasmic localization and protein stabilization regions lie at residues 54-69 (SKSS…NRGS) and 117-192 (RFSS…STCS). Residues serine 119, serine 120, serine 122, and serine 143 each carry the phosphoserine modification. The segment at 161-270 (YCDPRGTLRK…KCQAIGAYYI (110 aa)) is required for WNT-mediated nuclear localization. ARM repeat units lie at residues 244–275 (SGLT…HTCF), 276–317 (QDES…NLVF), 318–360 (RSTT…NLSS), 361–412 (TDEL…GCLR), 413–443 (NLSS…NCVA), 505–536 (NYDC…LNLM), 537–583 (GKSK…IARL), 584–629 (LQSG…SHTG), and 630–693 (NTSN…DMWS).

The protein belongs to the beta-catenin family. As to quaternary structure, part of a complex that contains DSG3, PKP1, YAP1 and YWHAG; the complex is required for localization of DSG3 and YAP1 to the cell membrane in keratinocytes. Interacts (via N-terminus) with KRT5/CK5, KRT8/CK8 (via rod domain), KRT15/CK15 and KRT18/CK18 (via rod domain) as part of intermediate filaments. Interacts with VIM (via rod domain). Interacts with DSP. Interacts with DES. Interacts with FXR1; the interaction may facilitate the binding of PKP1 to PKP2, PKP3 and DSP mRNA. Interacts (via N-terminus) with EIF4A1; the interaction promotes EIF4A1 recruitment to the cap-dependent translation complex and EIF4A1 ATPase activity. Interacts with TJP1/ZO-1; the interaction facilitates TJP1/ZO-1 localization to the plasma membrane. Interacts (when phosphorylated) with YWHAG; the interaction results in translocation of PKP1 to the cytoplasm and loss of intercellular adhesion in keratinocytes. Post-translationally, phosphorylated by AKT2; required for interaction with YWHAG and subsequent localization away from desmosomes to the cytoplasm. Phosphorylation of Ser-119 by AKT2 promotes PKP1-driven cap-dependent mRNA translation and decreases intercellular adhesion, phosphorylation is promoted by insulin. Phosphorylation by RIPK4 at the N-terminus is required for its role in differentiation of keratinocytes and DSG1 localization at cell junctions.

Its subcellular location is the nucleus. The protein localises to the cytoplasm. It localises to the perinuclear region. It is found in the cell junction. The protein resides in the desmosome. Its subcellular location is the cell membrane. The protein localises to the stress granule. Functionally, a component of desmosome cell-cell junctions which are required for positive regulation of cellular adhesion. Plays a role in desmosome protein expression regulation and localization to the desmosomal plaque, thereby maintaining cell sheet integrity and anchorage of desmosomes to intermediate filaments. Required for localization of DSG3 and YAP1 to the cell membrane in keratinocytes in response to mechanical strain, via the formation of an interaction complex composed of DSG3, YAP1, PKP1 and YWHAG. Positively regulates differentiation of keratinocytes, potentially via promoting localization of DSG1 at desmosome cell junctions. Required for calcium-independent development and maturation of desmosome plaques specifically at lateral cell-cell contacts in differentiating keratinocytes. Plays a role in the maintenance of DSG3 protein abundance, DSG3 clustering and localization of these clusters to the cell membrane in keratinocytes. May also promote keratinocyte proliferation and morphogenesis during postnatal development. Required for tight junction inside-out transepidermal barrier function of the skin. Promotes Wnt-mediated proliferation and differentiation of ameloblasts, via facilitating TJP1/ZO-1 localization to tight junctions. Binds single-stranded DNA (ssDNA), and may thereby play a role in sensing DNA damage and promoting cell survival. Positively regulates cap-dependent translation and as a result cell proliferation, via recruitment of EIF4A1 to the initiation complex and promotion of EIF4A1 ATPase activity. Regulates the mRNA stability and protein abundance of desmosome components PKP2, PKP3, DSC2 and DSP, potentially via its interaction with FXR1. May facilitate the formation of intermediate filaments. This is Plakophilin-1 (PKP1) from Bos taurus (Bovine).